A 998-amino-acid polypeptide reads, in one-letter code: tRNA (34-2'-O)-methyltransferase regulator WDR6 (998 aa).

WD repeat units follow at residues 148–185 (LYYT…ESDP), 200–239 (AHNG…DWTT), 250–291 (GHSS…ILKR), 294–333 (QFGA…NRPK), 476–515 (NNRE…DDFQ), 527–566 (MGSN…STLR), 567–608 (VSQR…LLQL), 664–704 (RNCN…LSQR), 779–821 (ARLM…QLDL), 826–865 (DIQR…TYFQ), and 868–911 (LHVT…VEQK).

Belongs to the WD repeat WDR6 family. Interacts with Trm7-34.

It is found in the cytoplasm. In terms of biological role, together with methyltransferase Trm7-34, methylates the 2'-O-ribose of nucleotides at position 34 of the anticodon loop of substrate tRNAs. In Drosophila melanogaster (Fruit fly), this protein is tRNA (34-2'-O)-methyltransferase regulator WDR6.